Consider the following 128-residue polypeptide: Sirohydrochlorin cobaltochelatase (128 aa).

The active-site Proton acceptor is the His9. Co(2+) is bound at residue His9. Substrate is bound by residues Lys43 and 68-73 (FATGTH). A Co(2+)-binding site is contributed by His73.

The protein belongs to the CbiX family. CbiXS subfamily. As to quaternary structure, homotetramer; dimer of dimers.

It catalyses the reaction Co-sirohydrochlorin + 2 H(+) = sirohydrochlorin + Co(2+). The protein operates within cofactor biosynthesis; adenosylcobalamin biosynthesis; cob(II)yrinate a,c-diamide from sirohydrochlorin (anaerobic route): step 1/10. Its function is as follows. Catalyzes the insertion of Co(2+) into sirohydrochlorin as part of the anaerobic pathway to cobalamin biosynthesis. The polypeptide is Sirohydrochlorin cobaltochelatase (Saccharolobus islandicus (strain Y.N.15.51 / Yellowstone #2) (Sulfolobus islandicus)).